Here is a 1086-residue protein sequence, read N- to C-terminus: Endo-1,4-beta-xylanase C (1086 aa).

Residues 1–31 (MRGKWLRLCLAAVLIVSLLPGLGAGEWKASA) form the signal peptide. CBM-cenC domains follow at residues 35–183 (GDIL…IRLV) and 197–359 (GQAL…ITAT). The 346-residue stretch at 365–710 (EKNIPDLAKK…KPAYWALVDP (346 aa)) folds into the GH10 domain. Glu502 functions as the Proton donor in the catalytic mechanism. Residue Asp556 is part of the active site. Catalysis depends on Glu620, which acts as the Nucleophile.

It belongs to the glycosyl hydrolase 10 (cellulase F) family.

The enzyme catalyses Endohydrolysis of (1-&gt;4)-beta-D-xylosidic linkages in xylans.. It functions in the pathway glycan degradation; xylan degradation. Endoxylanase with high hydrolytic activity on birchwood and oat spelt xylan. Xylotetraose, xylotriose, xylobiose and xylose are the main products from birchwood xylan hydrolysis. Shows increasing activity on xylo-oligosaccharides of increasing length. Displays very low hydrolytic activity on Avicel, carboxymethylcellulose (CMC) and p-nitrophenyl-beta-xylopyranoside. Also shows transxylosidase activity, allowing the formation of xylo-oligosaccharides of higher degree of polymerization than the starting substrate. The protein is Endo-1,4-beta-xylanase C (xynC) of Paenibacillus barcinonensis.